We begin with the raw amino-acid sequence, 513 residues long: Light-independent protochlorophyllide reductase subunit B (513 aa).

Position 36 (Asp-36) interacts with [4Fe-4S] cluster. The active-site Proton donor is the Asp-299. Residue 434-435 (GM) participates in substrate binding.

The protein belongs to the ChlB/BchB/BchZ family. Protochlorophyllide reductase is composed of three subunits; ChlL, ChlN and ChlB. Forms a heterotetramer of two ChlB and two ChlN subunits. The cofactor is [4Fe-4S] cluster.

The protein localises to the plastid. Its subcellular location is the chloroplast. It catalyses the reaction chlorophyllide a + oxidized 2[4Fe-4S]-[ferredoxin] + 2 ADP + 2 phosphate = protochlorophyllide a + reduced 2[4Fe-4S]-[ferredoxin] + 2 ATP + 2 H2O. It participates in porphyrin-containing compound metabolism; chlorophyll biosynthesis (light-independent). Its function is as follows. Component of the dark-operative protochlorophyllide reductase (DPOR) that uses Mg-ATP and reduced ferredoxin to reduce ring D of protochlorophyllide (Pchlide) to form chlorophyllide a (Chlide). This reaction is light-independent. The NB-protein (ChlN-ChlB) is the catalytic component of the complex. This Marchantia polymorpha (Common liverwort) protein is Light-independent protochlorophyllide reductase subunit B.